A 469-amino-acid polypeptide reads, in one-letter code: tRNA-2-methylthio-N(6)-dimethylallyladenosine synthase (469 aa).

Residues 22–142 form the MTTase N-terminal domain; that stretch reads RKVFIKTYGC…LPEALRRAKE (121 aa). 6 residues coordinate [4Fe-4S] cluster: cysteine 31, cysteine 67, cysteine 105, cysteine 183, cysteine 187, and cysteine 190. One can recognise a Radical SAM core domain in the interval 169-401; sequence RARGVTAFLT…QALLLKQQQE (233 aa). One can recognise a TRAM domain in the interval 404 to 466; that stretch reads ESCIGKEIDL…NNSLFAERAE (63 aa).

Belongs to the methylthiotransferase family. MiaB subfamily. Monomer. [4Fe-4S] cluster serves as cofactor.

It is found in the cytoplasm. It carries out the reaction N(6)-dimethylallyladenosine(37) in tRNA + (sulfur carrier)-SH + AH2 + 2 S-adenosyl-L-methionine = 2-methylsulfanyl-N(6)-dimethylallyladenosine(37) in tRNA + (sulfur carrier)-H + 5'-deoxyadenosine + L-methionine + A + S-adenosyl-L-homocysteine + 2 H(+). In terms of biological role, catalyzes the methylthiolation of N6-(dimethylallyl)adenosine (i(6)A), leading to the formation of 2-methylthio-N6-(dimethylallyl)adenosine (ms(2)i(6)A) at position 37 in tRNAs that read codons beginning with uridine. The protein is tRNA-2-methylthio-N(6)-dimethylallyladenosine synthase of Rhizobium leguminosarum bv. trifolii (strain WSM2304).